A 367-amino-acid polypeptide reads, in one-letter code: Indole glucosinolate O-methyltransferase 5 (367 aa).

Positions 209, 232, 252, 253, and 266 each coordinate S-adenosyl-L-homocysteine. Residue histidine 270 is the Proton acceptor of the active site.

It belongs to the class I-like SAM-binding methyltransferase superfamily. Cation-independent O-methyltransferase family.

The protein operates within secondary metabolite biosynthesis. Involved in indole glucosinolate biosynthesis. Catalyzes methoxylation reactions of the glucosinolate indole ring. Converts the hydroxy intermediates 4-hydroxy-indol-3-yl-methylglucosinolate (4OH-I3M) and 1-hydroxy-indol-3-yl-methylglucosinolate (1OH-I3M) to 4-methoxy-indol-3-yl-methylglucosinolate (4MO-I3M) and 1-methoxy-indol-3-yl-methylglucosinolate, respectively. The sequence is that of Indole glucosinolate O-methyltransferase 5 from Arabidopsis thaliana (Mouse-ear cress).